Here is a 624-residue protein sequence, read N- to C-terminus: Alpha-galactosidase 3 (624 aa).

Residues 1–22 (MSPSAAVLIPLAAAVLLRPVVG) form the signal peptide. 5 N-linked (GlcNAc...) asparagine glycosylation sites follow: asparagine 37, asparagine 56, asparagine 197, asparagine 259, and asparagine 293. Aspartate 347 acts as the Nucleophile in catalysis. N-linked (GlcNAc...) asparagine glycosylation is present at asparagine 393. Aspartate 412 functions as the Proton donor in the catalytic mechanism. N-linked (GlcNAc...) asparagine glycosylation is present at asparagine 469.

This sequence belongs to the glycosyl hydrolase 27 family.

The protein resides in the secreted. It carries out the reaction Hydrolysis of terminal, non-reducing alpha-D-galactose residues in alpha-D-galactosides, including galactose oligosaccharides, galactomannans and galactolipids.. Alpha-galactosidase involved in the degradation of simple oligosaccharides like melibiose, raffinose and stachyose, and of polymeric galacto(gluco)mannans. This Hypocrea jecorina (Trichoderma reesei) protein is Alpha-galactosidase 3 (agl3).